A 472-amino-acid chain; its full sequence is 6-phosphogluconate dehydrogenase, decarboxylating (472 aa).

Residues 10–15 (GMAVMG), 33–35 (NRT), 74–76 (VQA), and N102 contribute to the NADP(+) site. Residues N102 and 128 to 130 (SGG) each bind substrate. The Proton acceptor role is filled by K184. 187 to 188 (HN) contacts substrate. E191 (proton donor) is an active-site residue. Residues Y192, K262, R289, R447, and H453 each contribute to the substrate site.

The protein belongs to the 6-phosphogluconate dehydrogenase family. As to quaternary structure, homodimer.

The enzyme catalyses 6-phospho-D-gluconate + NADP(+) = D-ribulose 5-phosphate + CO2 + NADPH. The protein operates within carbohydrate degradation; pentose phosphate pathway; D-ribulose 5-phosphate from D-glucose 6-phosphate (oxidative stage): step 3/3. Its function is as follows. Catalyzes the oxidative decarboxylation of 6-phosphogluconate to ribulose 5-phosphate and CO(2), with concomitant reduction of NADP to NADPH. The sequence is that of 6-phosphogluconate dehydrogenase, decarboxylating (gnd) from Lactococcus lactis subsp. lactis (strain IL1403) (Streptococcus lactis).